Here is a 261-residue protein sequence, read N- to C-terminus: 5-hmdU DNA kinase (261 aa).

It belongs to the thymidylate kinase family. 5-hmdU DNA kinase subfamily.

The catalysed reaction is 5-hydroxymethyl-dUMP in DNA + ATP = 5-phosphomethyl-dUMP in DNA + ADP + H(+). Functionally, phosphorylates 5-hydroxymethyluracil (5hmdU) into 5-phosphomethyl-2'-deoxyuridine (5- PmdU) on DNA as a step in the pathway leading to thymidine hypermodifications in the viral genome. As a final result of the pathway of hypermodification, 5-Nalpha-putrescinylthymidine (Nalpha-PutT) substitutes for about 50% of thymidines in the viral DNA. These modifications probably prevent degradation of viral genome by the host restriction-modification antiviral defense system. The sequence is that of 5-hmdU DNA kinase from Delftia phage PhiW-14 (Deftia acidovorans bacteriophage phiW-14).